We begin with the raw amino-acid sequence, 134 residues long: Phosphoribosyl-AMP cyclohydrolase (134 aa).

Aspartate 90 serves as a coordination point for Mg(2+). Residue cysteine 91 coordinates Zn(2+). Mg(2+) contacts are provided by aspartate 92 and aspartate 94. Zn(2+) is bound by residues cysteine 107 and cysteine 114.

This sequence belongs to the PRA-CH family. As to quaternary structure, homodimer. It depends on Mg(2+) as a cofactor. Zn(2+) serves as cofactor.

The protein resides in the cytoplasm. The enzyme catalyses 1-(5-phospho-beta-D-ribosyl)-5'-AMP + H2O = 1-(5-phospho-beta-D-ribosyl)-5-[(5-phospho-beta-D-ribosylamino)methylideneamino]imidazole-4-carboxamide. The protein operates within amino-acid biosynthesis; L-histidine biosynthesis; L-histidine from 5-phospho-alpha-D-ribose 1-diphosphate: step 3/9. Its function is as follows. Catalyzes the hydrolysis of the adenine ring of phosphoribosyl-AMP. The sequence is that of Phosphoribosyl-AMP cyclohydrolase from Arthrobacter sp. (strain FB24).